Reading from the N-terminus, the 238-residue chain is Phosphatidylcholine synthase (238 aa).

Residues 1–16 (MPVNLSMTPINKAKAW) are Cytoplasmic-facing. Residues 17-37 (GVHAVTASGVILALLALLALV) traverse the membrane as a helical segment. Over 38–41 (DNKP) the chain is Periplasmic. Residues 42-62 (QACLLWLGLALLVDGLDGTLA) traverse the membrane as a helical segment. At 63 to 75 (RKYEVKEMLPHFD) the chain is on the cytoplasmic side. The chain crosses the membrane as a helical span at residues 76–96 (GSVLDLVIDYLTYVFIPAIFI). The Periplasmic portion of the chain corresponds to 97–104 (YRYIPLPE). The helical transmembrane segment at 105–125 (HFELLAVGVILVSSLFCFCNV) threads the bilayer. Residues 126-132 (NMKSTDN) are Cytoplasmic-facing. The helical transmembrane segment at 133-153 (YFVGFPAAWNVVAVYFYVLDL) threads the bilayer. Residues 154-155 (HP) lie on the Periplasmic side of the membrane. Residues 156-176 (WVNLATVLVLAALTLTRMKFL) form a helical membrane-spanning segment. Residues 177–183 (HPFRVRQ) lie on the Cytoplasmic side of the membrane. The chain crosses the membrane as a helical span at residues 184–204 (FMPLNIAVTFVWLISSGLLIV). Topologically, residues 205-209 (QQPAD) are periplasmic. The chain crosses the membrane as a helical span at residues 210-230 (LPILLGLWFAASAYFVGICLW). Over 231–238 (RSAREWFG) the chain is Cytoplasmic.

Belongs to the CDP-alcohol phosphatidyltransferase class-I family. It depends on Mn(2+) as a cofactor.

It localises to the cell inner membrane. It carries out the reaction a CDP-1,2-diacyl-sn-glycerol + choline = a 1,2-diacyl-sn-glycero-3-phosphocholine + CMP + H(+). Functionally, condenses choline with CDP-diglyceride to produce phosphatidylcholine and CMP. In Pseudomonas aeruginosa (strain ATCC 15692 / DSM 22644 / CIP 104116 / JCM 14847 / LMG 12228 / 1C / PRS 101 / PAO1), this protein is Phosphatidylcholine synthase.